The following is a 231-amino-acid chain: Cytochrome c oxidase assembly factor 7 (231 aa).

A2 is modified (N-acetylalanine). Sel1-like repeat units follow at residues 34–66 (PEGCYRLVDYLEGIQKNFDEAAKVLKFNCEKYG), 68–104 (GDSCYKLGAYYVTGKGGLTQDLKAASSCFLMACEKPG), 108–146 (VESCHNVGLLAHDGQVNEDGQPDLGKARDYYSRACDGGY), 147–183 (AASCFNLSAMFLQGAPGFPKDMGLACKYSMKACDLGH), and 184–219 (VWACANASRMYKLGDGVDKDEAKAEVLKNRARQLHK).

Belongs to the hcp beta-lactamase family. In terms of assembly, interacts with CHCHD4/MIA40 through transient intermolecular disulfide bonds.

The protein localises to the mitochondrion intermembrane space. In terms of biological role, required for assembly of mitochondrial respiratory chain complex I and complex IV. This is Cytochrome c oxidase assembly factor 7 (Coa7) from Mus musculus (Mouse).